The sequence spans 110 residues: Large ribosomal subunit protein P2B (110 aa).

Serine 29 is subject to Phosphoserine. A Glycyl lysine isopeptide (Lys-Gly) (interchain with G-Cter in ubiquitin) cross-link involves residue lysine 49. Residues 66–110 are disordered; that stretch reads VPTGGASSAAAGAAGAAAGGDAAEEEKEEEAKEESDDDMGFGLFD. Over residues 69 to 86 the composition is skewed to low complexity; sequence GGASSAAAGAAGAAAGGD. Positions 87 to 104 are enriched in acidic residues; sequence AAEEEKEEEAKEESDDDM. Residue serine 100 is modified to Phosphoserine.

Belongs to the eukaryotic ribosomal protein P1/P2 family. As to quaternary structure, component of the large ribosomal subunit (LSU). Mature yeast ribosomes consist of a small (40S) and a large (60S) subunit. The 40S small subunit contains 1 molecule of ribosomal RNA (18S rRNA) and 33 different proteins (encoded by 57 genes). The large 60S subunit contains 3 rRNA molecules (25S, 5.8S and 5S rRNA) and 46 different proteins (encoded by 81 genes). The 5 acidic ribosomal P-proteins form the stalk structure of the 60S subunit. They are organized as a pentameric complex in which uL10/P0 interacts with 2 heterodimers, P1A-P2B and P1B-P2A. Post-translationally, the N-terminus is not modified.

Its subcellular location is the cytoplasm. In terms of biological role, component of the ribosome, a large ribonucleoprotein complex responsible for the synthesis of proteins in the cell. The small ribosomal subunit (SSU) binds messenger RNAs (mRNAs) and translates the encoded message by selecting cognate aminoacyl-transfer RNA (tRNA) molecules. The large subunit (LSU) contains the ribosomal catalytic site termed the peptidyl transferase center (PTC), which catalyzes the formation of peptide bonds, thereby polymerizing the amino acids delivered by tRNAs into a polypeptide chain. The nascent polypeptides leave the ribosome through a tunnel in the LSU and interact with protein factors that function in enzymatic processing, targeting, and the membrane insertion of nascent chains at the exit of the ribosomal tunnel. This Saccharomyces cerevisiae (strain ATCC 204508 / S288c) (Baker's yeast) protein is Large ribosomal subunit protein P2B.